A 279-amino-acid polypeptide reads, in one-letter code: S-methyl-5'-thioadenosine phosphorylase (279 aa).

Phosphate is bound by residues serine 28, 70–71 (RH), and 103–104 (SA). Methionine 202 contributes to the substrate binding site. Residue threonine 203 participates in phosphate binding. Substrate is bound at residue 226 to 228 (DYD).

It belongs to the PNP/MTAP phosphorylase family. MTAP subfamily. Homohexamer. Dimer of a homotrimer.

It carries out the reaction S-methyl-5'-thioadenosine + phosphate = 5-(methylsulfanyl)-alpha-D-ribose 1-phosphate + adenine. It participates in amino-acid biosynthesis; L-methionine biosynthesis via salvage pathway; S-methyl-5-thio-alpha-D-ribose 1-phosphate from S-methyl-5'-thioadenosine (phosphorylase route): step 1/1. Its function is as follows. Catalyzes the reversible phosphorylation of S-methyl-5'-thioadenosine (MTA) to adenine and 5-methylthioribose-1-phosphate. Involved in the breakdown of MTA, a major by-product of polyamine biosynthesis. Responsible for the first step in the methionine salvage pathway after MTA has been generated from S-adenosylmethionine. Has broad substrate specificity with 6-aminopurine nucleosides as preferred substrates. The protein is S-methyl-5'-thioadenosine phosphorylase of Pyrobaculum aerophilum (strain ATCC 51768 / DSM 7523 / JCM 9630 / CIP 104966 / NBRC 100827 / IM2).